A 68-amino-acid polypeptide reads, in one-letter code: ATP synthase protein 8 (68 aa).

The chain crosses the membrane as a helical span at residues 8–24; that stretch reads TWLTIITPTLLALFLIT. Lysine 54 is modified (N6-acetyllysine; alternate). The residue at position 54 (lysine 54) is an N6-succinyllysine; alternate. Lysine 57 is subject to N6-acetyllysine.

The protein belongs to the ATPase protein 8 family. F-type ATPases have 2 components, CF(1) - the catalytic core - and CF(0) - the membrane proton channel. Component of an ATP synthase complex composed of ATP5PB, ATP5MC1, ATP5F1E, ATP5PD, ATP5ME, ATP5PF, ATP5MF, MT-ATP6, MT-ATP8, ATP5F1A, ATP5F1B, ATP5F1D, ATP5F1C, ATP5PO, ATP5MG, ATP5MK and ATP5MJ. Interacts with PRICKLE3.

The protein localises to the mitochondrion membrane. Its function is as follows. Mitochondrial membrane ATP synthase (F(1)F(0) ATP synthase or Complex V) produces ATP from ADP in the presence of a proton gradient across the membrane which is generated by electron transport complexes of the respiratory chain. F-type ATPases consist of two structural domains, F(1) - containing the extramembraneous catalytic core and F(0) - containing the membrane proton channel, linked together by a central stalk and a peripheral stalk. During catalysis, ATP synthesis in the catalytic domain of F(1) is coupled via a rotary mechanism of the central stalk subunits to proton translocation. Part of the complex F(0) domain. Minor subunit located with subunit a in the membrane. This chain is ATP synthase protein 8 (MT-ATP8), found in Pongo pygmaeus (Bornean orangutan).